Consider the following 402-residue polypeptide: Multidrug resistance protein MdtH (402 aa).

The Cytoplasmic portion of the chain corresponds to 1-12; the sequence is MSRVSQARNLGK. Residues 13 to 33 traverse the membrane as a helical segment; the sequence is YFLLIDNMLVVLGFFVVFPLI. Residues 34–98 are Periplasmic-facing; that stretch reads SIRFVDQMGW…GFATMGIAHE (65 aa). The chain crosses the membrane as a helical span at residues 99–116; it reads PWLLWFSCLLSGLGGTLF. Residues 117-138 lie on the Cytoplasmic side of the membrane; that stretch reads DPPRSALVVKLIRPQQRGRFFS. A helical transmembrane segment spans residues 139 to 159; the sequence is LLMMQDSAGAVIGALLGSWLL. Over 160-164 the chain is Periplasmic; it reads QYDFR. Residues 165-185 traverse the membrane as a helical segment; the sequence is LVCATGAVLFVLCAAFNAWLL. At 186 to 213 the chain is on the cytoplasmic side; sequence PAWKLSTVRTPVREGMTRVMRDKRFVTY. A helical transmembrane segment spans residues 214-234; sequence VLTLAGYYMLAVQVMLMLPIM. Topologically, residues 235-243 are periplasmic; the sequence is VNDVAGAPS. A helical transmembrane segment spans residues 244–264; the sequence is AVKWMYAIEACLSLTLLYPIA. Residues 265-276 are Cytoplasmic-facing; it reads RWSEKHFRLEHR. A helical membrane pass occupies residues 277 to 297; sequence LMAGLLIMSLSMMPVGMVSGL. Topologically, residues 298-299 are periplasmic; it reads QQ. The chain crosses the membrane as a helical span at residues 300–320; sequence LFTLICLFYIGSIIAEPARET. The Cytoplasmic segment spans residues 321-339; it reads LSASLADARARGSYMGFSR. A helical transmembrane segment spans residues 340-360; the sequence is LGLAIGGAIGYIGGGWLFDLG. Topologically, residues 361–367 are periplasmic; the sequence is KSAHQPE. Residues 368 to 388 form a helical membrane-spanning segment; sequence LPWMMLGIIGIFTFLALGWQF. The Cytoplasmic segment spans residues 389 to 402; sequence SQKRAARRLLERDA.

The protein belongs to the major facilitator superfamily. DHA1 family. MdtH (TC 2.A.1.2.21) subfamily.

The protein resides in the cell inner membrane. Functionally, confers resistance to norfloxacin and enoxacin. The sequence is that of Multidrug resistance protein MdtH from Escherichia coli O139:H28 (strain E24377A / ETEC).